A 142-amino-acid polypeptide reads, in one-letter code: Hemoglobin subunit alpha (142 aa).

A Globin domain is found at 2–142 (VLSAADKTNV…VSTVLTSKYR (141 aa)). Serine 4 is subject to Phosphoserine. Lysine 8 is subject to N6-succinyllysine. Threonine 9 carries the post-translational modification Phosphothreonine. Lysine 12 carries the N6-succinyllysine modification. Lysine 17 is modified (N6-acetyllysine; alternate). Residue lysine 17 is modified to N6-succinyllysine; alternate. Tyrosine 25 bears the Phosphotyrosine mark. Lysine 41 is modified (N6-succinyllysine). Serine 50 carries the phosphoserine modification. Histidine 59 contacts O2. Histidine 88 contributes to the heme b binding site. At serine 103 the chain carries Phosphoserine. A Phosphothreonine modification is found at threonine 109. Residues serine 125 and serine 132 each carry the phosphoserine modification. Threonine 135 and threonine 138 each carry phosphothreonine. Serine 139 bears the Phosphoserine mark.

It belongs to the globin family. In terms of assembly, heterotetramer of two alpha chains and two beta chains. Red blood cells.

Functionally, involved in oxygen transport from the lung to the various peripheral tissues. Its function is as follows. Hemopressin acts as an antagonist peptide of the cannabinoid receptor CNR1. Hemopressin-binding efficiently blocks cannabinoid receptor CNR1 and subsequent signaling. The protein is Hemoglobin subunit alpha (HBA) of Equus caballus (Horse).